The chain runs to 327 residues: Phenylalanine--tRNA ligase alpha subunit (327 aa).

Glu252 is a Mg(2+) binding site.

This sequence belongs to the class-II aminoacyl-tRNA synthetase family. Phe-tRNA synthetase alpha subunit type 1 subfamily. As to quaternary structure, tetramer of two alpha and two beta subunits. It depends on Mg(2+) as a cofactor.

The protein resides in the cytoplasm. The enzyme catalyses tRNA(Phe) + L-phenylalanine + ATP = L-phenylalanyl-tRNA(Phe) + AMP + diphosphate + H(+). The protein is Phenylalanine--tRNA ligase alpha subunit of Escherichia coli O127:H6 (strain E2348/69 / EPEC).